Here is a 506-residue protein sequence, read N- to C-terminus: ATP synthase subunit alpha, chloroplastic (506 aa).

Position 172-179 (172-179) interacts with ATP; sequence GDRQTGKT.

This sequence belongs to the ATPase alpha/beta chains family. As to quaternary structure, F-type ATPases have 2 components, CF(1) - the catalytic core - and CF(0) - the membrane proton channel. CF(1) has five subunits: alpha(3), beta(3), gamma(1), delta(1), epsilon(1). CF(0) has four main subunits: a, b, b' and c.

Its subcellular location is the plastid. It is found in the chloroplast thylakoid membrane. It carries out the reaction ATP + H2O + 4 H(+)(in) = ADP + phosphate + 5 H(+)(out). Its function is as follows. Produces ATP from ADP in the presence of a proton gradient across the membrane. The alpha chain is a regulatory subunit. This chain is ATP synthase subunit alpha, chloroplastic, found in Pleurastrum terricola (Filamentous green alga).